We begin with the raw amino-acid sequence, 507 residues long: RNA-splicing ligase RtcB homolog (507 aa).

Asp-121, Cys-124, His-229, His-261, and His-355 together coordinate Mn(2+). 228–232 (NHYAE) contacts GMP. Residues 355–356 (HN), 404–407 (GGTM), Ser-411, 430–433 (HGAG), and Lys-506 each bind GMP. His-430 (GMP-histidine intermediate) is an active-site residue.

Belongs to the RtcB family. In terms of assembly, catalytic component of the tRNA-splicing ligase complex. Mn(2+) serves as cofactor.

The enzyme catalyses a 3'-end 3'-phospho-ribonucleotide-RNA + a 5'-end dephospho-ribonucleoside-RNA + GTP = a ribonucleotidyl-ribonucleotide-RNA + GMP + diphosphate. The catalysed reaction is a 3'-end 2',3'-cyclophospho-ribonucleotide-RNA + a 5'-end dephospho-ribonucleoside-RNA + GTP + H2O = a ribonucleotidyl-ribonucleotide-RNA + GMP + diphosphate + H(+). Catalytic subunit of the tRNA-splicing ligase complex that acts by directly joining spliced tRNA halves to mature-sized tRNAs by incorporating the precursor-derived splice junction phosphate into the mature tRNA as a canonical 3',5'-phosphodiester. May act as an RNA ligase with broad substrate specificity, and may function toward other RNAs. In Branchiostoma floridae (Florida lancelet), this protein is RNA-splicing ligase RtcB homolog.